A 363-amino-acid polypeptide reads, in one-letter code: Adenosine deaminase (363 aa).

Residues His-42 and His-44 each coordinate Zn(2+). Residues 44 to 46, Asp-172, and Gly-201 each bind a purine D-ribonucleoside; that span reads HLD. The tract at residues 170–184 is gating helix loop; regulates binding affinity for substrates and thus substrate selectivity; it reads IGDTGHEAANIKASA. His-226 provides a ligand contact to Zn(2+). 3 residues coordinate a purine D-ribonucleoside: Glu-229, His-253, and Asp-310. Asp-310 contacts Zn(2+).

It belongs to the metallo-dependent hydrolases superfamily. Adenosine and AMP deaminases family. It depends on Zn(2+) as a cofactor.

It catalyses the reaction adenosine + H2O + H(+) = inosine + NH4(+). The enzyme catalyses S-methyl-5'-thioadenosine + H2O + H(+) = S-methyl-5'-thioinosine + NH4(+). It participates in purine metabolism; purine nucleoside salvage. With respect to regulation, inhibited by coformycin and methylthiocoformycin (MT-coformycin). In terms of biological role, catalyzes the hydrolytic deamination of adenosine to produce inosine. Unlike mammalian adenosine deaminases, also catalyzes the deamination of 5'-methylthioadenosine (MTA), a by-product of polyamine biosynthesis, to produce 5'-methylthioinosine (MTI). Plays an essential role in the purine salvage pathway which allows the parasite to use host cell purines for the synthesis of nucleic acids. The chain is Adenosine deaminase from Plasmodium cynomolgi (strain B).